The following is an 89-amino-acid chain: ATP synthase subunit c (89 aa).

2 helical membrane passes run 3-23 and 53-73; these read IILG…AIGA and FILA…ALMF.

This sequence belongs to the ATPase C chain family. As to quaternary structure, F-type ATPases have 2 components, F(1) - the catalytic core - and F(0) - the membrane proton channel. F(1) has five subunits: alpha(3), beta(3), gamma(1), delta(1), epsilon(1). F(0) has three main subunits: a(1), b(2) and c(10-14). The alpha and beta chains form an alternating ring which encloses part of the gamma chain. F(1) is attached to F(0) by a central stalk formed by the gamma and epsilon chains, while a peripheral stalk is formed by the delta and b chains.

Its subcellular location is the cell inner membrane. Functionally, f(1)F(0) ATP synthase produces ATP from ADP in the presence of a proton or sodium gradient. F-type ATPases consist of two structural domains, F(1) containing the extramembraneous catalytic core and F(0) containing the membrane proton channel, linked together by a central stalk and a peripheral stalk. During catalysis, ATP synthesis in the catalytic domain of F(1) is coupled via a rotary mechanism of the central stalk subunits to proton translocation. Its function is as follows. Key component of the F(0) channel; it plays a direct role in translocation across the membrane. A homomeric c-ring of between 10-14 subunits forms the central stalk rotor element with the F(1) delta and epsilon subunits. The sequence is that of ATP synthase subunit c from Verminephrobacter eiseniae (strain EF01-2).